We begin with the raw amino-acid sequence, 521 residues long: MQSHSKKRVCYYYDSDIGNYYYGQGHPMKPHRIRMTHNLLLNYGLYRKMEIYRPHKATADEMTKFHSDEYVRFLRSIRPDNMSEYNKQMQRFNVGEDCPVFDGLYEFCQLSAGGSVAAAVKLNKQASEICINWGGGLHHAKKSEASGFCYVNDIVLGILELLKYHQRVLYIDIDVHHGDGVEEAFYTTDRVMTVSFHKYGEYFPGTGDLRDIGAGKGKYYAVNIPLRDGMDDDAYESIFVPIISKVMETFQPAAVVLQCGADSLTGDRLGCFNLTVKGHGKCVEFVKKYNLPFLMVGGGGYTIRNVSRCWTYETSVALAVEIANELPYNDYFEYFGPDFKLHISPSNMTNQNTSEYLEKIKNRLFENLRMLPHAPGVQIQAIPEDAINDESDDEDKVDKDDRLPQSDKDKRIVPENEYSDSEDEGEGGRRDNRSYKGQRKRPRLDKDTNSNKASSETSSEIKDEKEKGDGADGEESTASNTNSNNNSNNKSDNDAGATANAGSGSGSGSGAGAKGAKENNI.

A histone deacetylase region spans residues 7–319 (KRVCYYYDSD…WTYETSVALA (313 aa)). H139 is a catalytic residue. The interval 376-521 (GVQIQAIPED…GAKGAKENNI (146 aa)) is disordered. Over residues 386 to 395 (AINDESDDED) the composition is skewed to acidic residues. A Phosphoserine modification is found at S391. Residues 396-414 (KVDKDDRLPQSDKDKRIVP) are compositionally biased toward basic and acidic residues. S419, S421, and S455 each carry phosphoserine. T457 is subject to Phosphothreonine. Over residues 459 to 470 (SEIKDEKEKGDG) the composition is skewed to basic and acidic residues. The segment covering 476–502 (STASNTNSNNNSNNKSDNDAGATANAG) has biased composition (low complexity). The segment covering 503-513 (SGSGSGSGAGA) has biased composition (gly residues).

The protein belongs to the histone deacetylase family. HD type 1 subfamily. As to quaternary structure, component of a form of the Esc/E(z) complex present specifically during early embryogenesis which is composed of Caf1-55, esc, E(z), Su(z)12, Pcl and HDAC1. The Esc/E(z) complex may also associate with Pcl and HDAC1 during early embryogenesis. This complex is distinct from the PRC1 complex, which contains many other PcG proteins like Pc, Ph, Psc, Su(z)2. The 2 complexes however cooperate and interact together during the first 3 hours of development to establish PcG silencing. Interacts with the histone methyltransferase Su(var)3-9. Component of a complex that contains at least HDAC1, CoRest and Su(var)3-3/Hdm. Component of the DREAM complex at least composed of Myb, Caf1-55, mip40, mip120, mip130, E2f2, Dp, Rbf, Rbf2, lin-52, HDAC1 and l(3)mbt. Interacts with the chromatin-remodeler Mi-2. Interacts with Rrp6.

The protein resides in the nucleus. It carries out the reaction N(6)-acetyl-L-lysyl-[histone] + H2O = L-lysyl-[histone] + acetate. Catalyzes the deacetylation of lysine residues on the N-terminal part of the core histones (H2A, H2B, H3 and H4). Histone deacetylation may constitute a tag for epigenetic repression and plays an important role in transcriptional regulation, cell cycle progression and developmental events. For instance, deacetylation of histone H3 may be a prerequisite for the subsequent recruitment of the histone methyltransferase Su(var)3-9 to histones. Involved in position-effect variegation (PEV). In the larval brain, part of a regulatory network including the transcriptional repressors klu, dpn and E(spl)mgamma-HLH which is required for type II neuroblast self-renewal and for maintaining erm in an inactive state in intermediate neural progenitors (INP). This Drosophila melanogaster (Fruit fly) protein is Histone deacetylase HDAC1.